An 848-amino-acid polypeptide reads, in one-letter code: Probable serine/threonine-protein kinase DDB_G0278535 (848 aa).

Low complexity-rich tracts occupy residues 1-52, 60-85, and 95-116; these read MNKS…NNNH, TAAT…TSST, and TSNS…VSTS. The segment at 1 to 117 is disordered; the sequence is MNKSSSASTV…SSSPQVSTSV (117 aa). ANK repeat units follow at residues 181-212, 218-248, 252-285, 289-320, and 324-353; these read MDQT…KMDI, SGYT…NVNI, DKNS…NVNA, NGET…EVNV, and RGES…DITI. The region spanning 378–441 is the SAM domain; the sequence is KNVQDIFNWL…IRNCRILRDQ (64 aa). The segment at 448–478 is disordered; sequence NSNVTTGSGSSGSTTTTTTTTTTTSGCGGLN. The segment covering 452–472 has biased composition (low complexity); it reads TTGSGSSGSTTTTTTTTTTTS. The 271-residue stretch at 529-799 folds into the Protein kinase domain; it reads LEYTLKLGSG…TLNRLRHEYM (271 aa). ATP contacts are provided by residues 535–543 and K556; that span reads LGSGSSGKV. Residue D650 is the Proton acceptor of the active site. The disordered stretch occupies residues 810–848; sequence RKLPSLSPPPQPTTTTTTTTSSSTSTNNINNNINNNNNT. The segment covering 822–848 has biased composition (low complexity); it reads TTTTTTTTSSSTSTNNINNNINNNNNT.

The protein belongs to the protein kinase superfamily. TKL Ser/Thr protein kinase family.

The enzyme catalyses L-seryl-[protein] + ATP = O-phospho-L-seryl-[protein] + ADP + H(+). It carries out the reaction L-threonyl-[protein] + ATP = O-phospho-L-threonyl-[protein] + ADP + H(+). This Dictyostelium discoideum (Social amoeba) protein is Probable serine/threonine-protein kinase DDB_G0278535.